We begin with the raw amino-acid sequence, 380 residues long: Queuine tRNA-ribosyltransferase (380 aa).

Residue Asp-96 is the Proton acceptor of the active site. Substrate-binding positions include 96–100 (DSGGF), Asp-150, Gln-193, and Gly-220. Residues 251-257 (GVGAPDS) form an RNA binding region. Catalysis depends on Asp-270, which acts as the Nucleophile. The RNA binding; important for wobble base 34 recognition stretch occupies residues 275–279 (TRIAR). Cys-308, Cys-310, Cys-313, and His-339 together coordinate Zn(2+).

This sequence belongs to the queuine tRNA-ribosyltransferase family. In terms of assembly, homodimer. Within each dimer, one monomer is responsible for RNA recognition and catalysis, while the other monomer binds to the replacement base PreQ1. Zn(2+) serves as cofactor.

It catalyses the reaction 7-aminomethyl-7-carbaguanine + guanosine(34) in tRNA = 7-aminomethyl-7-carbaguanosine(34) in tRNA + guanine. It participates in tRNA modification; tRNA-queuosine biosynthesis. Catalyzes the base-exchange of a guanine (G) residue with the queuine precursor 7-aminomethyl-7-deazaguanine (PreQ1) at position 34 (anticodon wobble position) in tRNAs with GU(N) anticodons (tRNA-Asp, -Asn, -His and -Tyr). Catalysis occurs through a double-displacement mechanism. The nucleophile active site attacks the C1' of nucleotide 34 to detach the guanine base from the RNA, forming a covalent enzyme-RNA intermediate. The proton acceptor active site deprotonates the incoming PreQ1, allowing a nucleophilic attack on the C1' of the ribose to form the product. After dissociation, two additional enzymatic reactions on the tRNA convert PreQ1 to queuine (Q), resulting in the hypermodified nucleoside queuosine (7-(((4,5-cis-dihydroxy-2-cyclopenten-1-yl)amino)methyl)-7-deazaguanosine). This is Queuine tRNA-ribosyltransferase from Streptococcus equi subsp. zooepidemicus (strain H70).